Consider the following 304-residue polypeptide: Tetrahydromethanopterin S-methyltransferase subunit E (304 aa).

Transmembrane regions (helical) follow at residues 3–23 (PLIG…AGAS), 86–106 (PLFA…TFAV), 131–151 (HTPV…VVSY), 152–172 (LMTV…IWGI), 233–253 (PVTG…TTVF), and 263–283 (WISV…NWKI).

This sequence belongs to the MtrE family. As to quaternary structure, the complex is composed of 8 subunits; MtrA, MtrB, MtrC, MtrD, MtrE, MtrF, MtrG and MtrH.

The protein resides in the cell membrane. It catalyses the reaction 5-methyl-5,6,7,8-tetrahydromethanopterin + coenzyme M + 2 Na(+)(in) = 5,6,7,8-tetrahydromethanopterin + methyl-coenzyme M + 2 Na(+)(out). Its pathway is one-carbon metabolism; methanogenesis from CO(2); methyl-coenzyme M from 5,10-methylene-5,6,7,8-tetrahydromethanopterin: step 2/2. In terms of biological role, part of a complex that catalyzes the formation of methyl-coenzyme M and tetrahydromethanopterin from coenzyme M and methyl-tetrahydromethanopterin. This is an energy-conserving, sodium-ion translocating step. This chain is Tetrahydromethanopterin S-methyltransferase subunit E, found in Methanosarcina acetivorans (strain ATCC 35395 / DSM 2834 / JCM 12185 / C2A).